An 824-amino-acid chain; its full sequence is Glycerol-3-phosphate acyltransferase (824 aa).

The short motif at cysteine 302–methionine 307 is the HXXXXD motif element.

It belongs to the GPAT/DAPAT family.

The protein localises to the cell inner membrane. It catalyses the reaction sn-glycerol 3-phosphate + an acyl-CoA = a 1-acyl-sn-glycero-3-phosphate + CoA. It functions in the pathway phospholipid metabolism; CDP-diacylglycerol biosynthesis; CDP-diacylglycerol from sn-glycerol 3-phosphate: step 1/3. This is Glycerol-3-phosphate acyltransferase from Actinobacillus pleuropneumoniae serotype 5b (strain L20).